The primary structure comprises 73 residues: Translation initiation factor IF-1 (73 aa).

An S1-like domain is found at 1-73; it reads MSEKEAGIEV…SRGRITYRDK (73 aa).

This sequence belongs to the IF-1 family. Component of the 30S ribosomal translation pre-initiation complex which assembles on the 30S ribosome in the order IF-2 and IF-3, IF-1 and N-formylmethionyl-tRNA(fMet); mRNA recruitment can occur at any time during PIC assembly.

The protein localises to the cytoplasm. One of the essential components for the initiation of protein synthesis. Stabilizes the binding of IF-2 and IF-3 on the 30S subunit to which N-formylmethionyl-tRNA(fMet) subsequently binds. Helps modulate mRNA selection, yielding the 30S pre-initiation complex (PIC). Upon addition of the 50S ribosomal subunit IF-1, IF-2 and IF-3 are released leaving the mature 70S translation initiation complex. In Anaeromyxobacter dehalogenans (strain 2CP-C), this protein is Translation initiation factor IF-1.